The sequence spans 455 residues: Glutamate-1-semialdehyde 2,1-aminomutase (455 aa).

Position 286 is an N6-(pyridoxal phosphate)lysine (lysine 286).

This sequence belongs to the class-III pyridoxal-phosphate-dependent aminotransferase family. HemL subfamily. As to quaternary structure, homodimer. The cofactor is pyridoxal 5'-phosphate.

It localises to the cytoplasm. The enzyme catalyses (S)-4-amino-5-oxopentanoate = 5-aminolevulinate. The protein operates within porphyrin-containing compound metabolism; protoporphyrin-IX biosynthesis; 5-aminolevulinate from L-glutamyl-tRNA(Glu): step 2/2. This is Glutamate-1-semialdehyde 2,1-aminomutase from Clavibacter michiganensis subsp. michiganensis (strain NCPPB 382).